Here is a 343-residue protein sequence, read N- to C-terminus: DNA-directed RNA polymerase subunit alpha (343 aa).

Positions 1 to 239 (MGETVTIQKN…DQLNVFVNFE (239 aa)) are alpha N-terminal domain (alpha-NTD). The segment at 255-343 (FNPAFLKKVD…ELAKRFEDHY (89 aa)) is alpha C-terminal domain (alpha-CTD).

It belongs to the RNA polymerase alpha chain family. As to quaternary structure, homodimer. The RNAP catalytic core consists of 2 alpha, 1 beta, 1 beta' and 1 omega subunit. When a sigma factor is associated with the core the holoenzyme is formed, which can initiate transcription.

The catalysed reaction is RNA(n) + a ribonucleoside 5'-triphosphate = RNA(n+1) + diphosphate. Functionally, DNA-dependent RNA polymerase catalyzes the transcription of DNA into RNA using the four ribonucleoside triphosphates as substrates. The sequence is that of DNA-directed RNA polymerase subunit alpha from Bradyrhizobium sp. (strain BTAi1 / ATCC BAA-1182).